The sequence spans 208 residues: Small ribosomal subunit protein uS4 (208 aa).

Positions 97 to 160 constitute an S4 RNA-binding domain; sequence TRLDNVCYRM…QKQLRVQEAL (64 aa).

It belongs to the universal ribosomal protein uS4 family. Part of the 30S ribosomal subunit. Contacts protein S5. The interaction surface between S4 and S5 is involved in control of translational fidelity.

Functionally, one of the primary rRNA binding proteins, it binds directly to 16S rRNA where it nucleates assembly of the body of the 30S subunit. In terms of biological role, with S5 and S12 plays an important role in translational accuracy. This Xanthomonas axonopodis pv. citri (strain 306) protein is Small ribosomal subunit protein uS4.